Here is a 443-residue protein sequence, read N- to C-terminus: Phosphomevalonate kinase ERG8 (443 aa).

160–170 (ANKTGLGSSAA) is an ATP binding site.

It belongs to the GHMP kinase family. Mevalonate kinase subfamily.

The catalysed reaction is (R)-5-phosphomevalonate + ATP = (R)-5-diphosphomevalonate + ADP. It functions in the pathway isoprenoid biosynthesis; isopentenyl diphosphate biosynthesis via mevalonate pathway; isopentenyl diphosphate from (R)-mevalonate: step 2/3. Its function is as follows. Phosphomevalonate kinase; part of the second module of ergosterol biosynthesis pathway that includes the middle steps of the pathway. ERG8 converts 5-phosphomevalonate to 5-diphosphomevalonate. The second module is carried out in the vacuole and involves the formation of farnesyl diphosphate, which is also an important intermediate in the biosynthesis of ubiquinone, dolichol, heme and prenylated proteins. Activity by the mevalonate kinase ERG12 (FG05912) first converts mevalonate into 5-phosphomevalonate. 5-phosphomevalonate is then further converted to 5-diphosphomevalonate by the phosphomevalonate kinase ERG8 (FG09764). The diphosphomevalonate decarboxylase ERG19 (FG10424) then produces isopentenyl diphosphate. The isopentenyl-diphosphate delta-isomerase IDI1 (FG09722) then catalyzes the 1,3-allylic rearrangement of the homoallylic substrate isopentenyl (IPP) to its highly electrophilic allylic isomer, dimethylallyl diphosphate (DMAPP). Finally the farnesyl diphosphate synthase ERG20 (FG06784) catalyzes the sequential condensation of isopentenyl pyrophosphate with dimethylallyl pyrophosphate, and then with the resultant geranylpyrophosphate to the ultimate product farnesyl pyrophosphate. This chain is Phosphomevalonate kinase ERG8, found in Gibberella zeae (strain ATCC MYA-4620 / CBS 123657 / FGSC 9075 / NRRL 31084 / PH-1) (Wheat head blight fungus).